Reading from the N-terminus, the 579-residue chain is Alpha-glucosidase (579 aa).

Aspartate 212 (nucleophile) is an active-site residue. Glutamate 269 (proton donor) is an active-site residue.

Belongs to the glycosyl hydrolase 13 family.

The enzyme catalyses Hydrolysis of terminal, non-reducing (1-&gt;4)-linked alpha-D-glucose residues with release of alpha-D-glucose.. In Schizosaccharomyces pombe (strain 972 / ATCC 24843) (Fission yeast), this protein is Alpha-glucosidase (mal1).